The chain runs to 178 residues: VIVGTPPISPNWPAIKDLLHLKFKTEITSSPLFCGYYLSPAGCIRNPLAHFAKLMTCVDDMSLPEKVLSYLSEVSIGHNLGDQIIQHLPPHLIQYQSACFDFFCRNCTPSQKLLLSNDPIPESKLLALVHKIKWASKAFFSELPQKAREFLVSKSSLPSFPNNPKVSELESELLHFSQ.

This sequence belongs to the tymovirus NS35 RNA replicase polyprotein family.

The enzyme catalyses RNA(n) + a ribonucleoside 5'-triphosphate = RNA(n+1) + diphosphate. The polypeptide is RNA replicase polyprotein (Physalis heterophylla (PhMV)).